A 121-amino-acid polypeptide reads, in one-letter code: Large ribosomal subunit protein uL14c (121 aa).

It belongs to the universal ribosomal protein uL14 family. Part of the 50S ribosomal subunit.

It localises to the plastid. It is found in the chloroplast. Functionally, binds to 23S rRNA. In Nephroselmis olivacea (Green alga), this protein is Large ribosomal subunit protein uL14c.